The chain runs to 274 residues: Tryptophan synthase alpha chain (274 aa).

Catalysis depends on proton acceptor residues Glu-49 and Asp-60.

It belongs to the TrpA family. As to quaternary structure, tetramer of two alpha and two beta chains.

It catalyses the reaction (1S,2R)-1-C-(indol-3-yl)glycerol 3-phosphate + L-serine = D-glyceraldehyde 3-phosphate + L-tryptophan + H2O. It functions in the pathway amino-acid biosynthesis; L-tryptophan biosynthesis; L-tryptophan from chorismate: step 5/5. The alpha subunit is responsible for the aldol cleavage of indoleglycerol phosphate to indole and glyceraldehyde 3-phosphate. The sequence is that of Tryptophan synthase alpha chain from Alkalilimnicola ehrlichii (strain ATCC BAA-1101 / DSM 17681 / MLHE-1).